The chain runs to 137 residues: ATP synthase epsilon chain (137 aa).

Belongs to the ATPase epsilon chain family. As to quaternary structure, F-type ATPases have 2 components, CF(1) - the catalytic core - and CF(0) - the membrane proton channel. CF(1) has five subunits: alpha(3), beta(3), gamma(1), delta(1), epsilon(1). CF(0) has three main subunits: a, b and c.

It is found in the cellular thylakoid membrane. In terms of biological role, produces ATP from ADP in the presence of a proton gradient across the membrane. The protein is ATP synthase epsilon chain of Trichormus variabilis (strain ATCC 29413 / PCC 7937) (Anabaena variabilis).